Consider the following 86-residue polypeptide: Small ribosomal subunit protein eS27y (86 aa).

The C4-type zinc-finger motif lies at 39 to 61; sequence CQGCFNITTVFSHSQTVVVCGNC.

The protein belongs to the eukaryotic ribosomal protein eS27 family. It depends on Zn(2+) as a cofactor.

Its function is as follows. May be involved in the elimination of damaged mRNA after UV irradiation. In Arabidopsis thaliana (Mouse-ear cress), this protein is Small ribosomal subunit protein eS27y (RPS27B).